The primary structure comprises 514 residues: Histidine ammonia-lyase (514 aa).

The segment at residues 144–146 is a cross-link (5-imidazolinone (Ala-Gly)); that stretch reads ASG. Position 145 is a 2,3-didehydroalanine (Ser) (serine 145).

It belongs to the PAL/histidase family. Contains an active site 4-methylidene-imidazol-5-one (MIO), which is formed autocatalytically by cyclization and dehydration of residues Ala-Ser-Gly.

It localises to the cytoplasm. The catalysed reaction is L-histidine = trans-urocanate + NH4(+). It functions in the pathway amino-acid degradation; L-histidine degradation into L-glutamate; N-formimidoyl-L-glutamate from L-histidine: step 1/3. This is Histidine ammonia-lyase from Rhodospirillum rubrum (strain ATCC 11170 / ATH 1.1.1 / DSM 467 / LMG 4362 / NCIMB 8255 / S1).